The primary structure comprises 132 residues: Matrix protein (132 aa).

It is found in the virion membrane. Envelope protein that may play a role in host-cell attachment and viral genome entry. The protein is Matrix protein of Halorubrum pleomorphic virus 1 (HRPV-1).